The following is a 67-amino-acid chain: Phycobilisome 7.8 kDa linker polypeptide, allophycocyanin-associated, core (67 aa).

Residues 1 to 56 (MRMFKITACVPSQTRIRTQRELQNTYFTKLVPYENWFREQQRIQKMGGKIVKVELF) enclose the CpcD-like domain.

Belongs to the phycobilisome linker protein family.

Its subcellular location is the cellular thylakoid membrane. Its function is as follows. Rod linker protein, associated with allophycocyanin. Linker polypeptides determine the state of aggregation and the location of the disk-shaped phycobiliprotein units within the phycobilisome and modulate their spectroscopic properties in order to mediate a directed and optimal energy transfer. The protein is Phycobilisome 7.8 kDa linker polypeptide, allophycocyanin-associated, core (apcC) of Thermosynechococcus vestitus (strain NIES-2133 / IAM M-273 / BP-1).